The sequence spans 158 residues: MTADSKDTSMSEDNTETATAIENSSAMVTDVTSKSAPNVRLSPDALIKEFEASQQKSDLNDIYVGDTVRVGVRISEGNKERIQPYEGVVIAKRHGGIHETITVRRIFQGIGVERVFMLHSPQVASIKVERRGKVRRAKLFYLRERVGKATRVKQRFDR.

The tract at residues Met1–Ser35 is disordered. A compositionally biased stretch (polar residues) spans Glu16–Ser35.

The protein belongs to the bacterial ribosomal protein bL19 family.

In terms of biological role, this protein is located at the 30S-50S ribosomal subunit interface and may play a role in the structure and function of the aminoacyl-tRNA binding site. The protein is Large ribosomal subunit protein bL19 of Prochlorococcus marinus (strain MIT 9313).